A 216-amino-acid polypeptide reads, in one-letter code: Elongation factor 1-beta (216 aa).

The segment at 71–131 (GQASGVSASS…AKKKESGKSS (61 aa)) is disordered. Residues 73 to 89 (ASGVSASSAPAAAAPAA) show a composition bias toward low complexity. The segment covering 92–107 (DEDDDDDMDLFGDETE) has biased composition (acidic residues). Residues 108 to 128 (EDKKAAAEREAAKPAKKKESG) are compositionally biased toward basic and acidic residues.

The protein belongs to the EF-1-beta/EF-1-delta family. In terms of assembly, EF-1 is composed of 4 subunits: alpha, beta (1B-alpha=beta'), delta (1B-beta), and gamma (1B-gamma).

Functionally, EF-1-beta and EF-1-beta' stimulate the exchange of GDP bound to EF-1-alpha to GTP. The protein is Elongation factor 1-beta of Triticum aestivum (Wheat).